Consider the following 160-residue polypeptide: Cyanate hydratase (160 aa).

Active-site residues include arginine 100, glutamate 103, and serine 126.

It belongs to the cyanase family.

It catalyses the reaction cyanate + hydrogencarbonate + 3 H(+) = NH4(+) + 2 CO2. Its function is as follows. Catalyzes the reaction of cyanate with bicarbonate to produce ammonia and carbon dioxide. This chain is Cyanate hydratase, found in Penicillium rubens (strain ATCC 28089 / DSM 1075 / NRRL 1951 / Wisconsin 54-1255) (Penicillium chrysogenum).